The primary structure comprises 470 residues: Neuraminidase (470 aa).

At 1-14 the chain is on the intravirion side; that stretch reads MNPNQKIITIGSVS. The segment at 11 to 32 is involved in apical transport and lipid raft association; that stretch reads GSVSLGLVVLNILLHIVSITIT. A helical transmembrane segment spans residues 15-35; the sequence is LGLVVLNILLHIVSITITVLV. The segment at 32-86 is hypervariable stalk region; that stretch reads TVLVLPGNGNNGSCNGTVIREYNETVRIEKVTQWHNTNVIEYIERSESDHFMNNT. The Virion surface segment spans residues 36 to 470; that stretch reads LPGNGNNGSC…AILPFDIDKM (435 aa). N42, N46, N54, and N84 each carry an N-linked (GlcNAc...) asparagine; by host glycan. The interval 89-470 is head of neuraminidase; sequence LCDAKGFAPF…AILPFDIDKM (382 aa). 8 disulfides stabilise this stretch: C90–C417, C122–C127, C182–C229, C231–C236, C277–C290, C279–C288, C316–C335, and C421–C446. Substrate is bound at residue R116. Residue N144 is glycosylated (N-linked (GlcNAc...) asparagine; by host). D149 (proton donor/acceptor) is an active-site residue. Substrate is bound at residue R150. Residue 275-276 participates in substrate binding; that stretch reads EE. Residue R291 coordinates substrate. D292 provides a ligand contact to Ca(2+). N293 is a glycosylation site (N-linked (GlcNAc...) asparagine; by host). 2 residues coordinate Ca(2+): G296 and D322. R368 serves as a coordination point for substrate. A glycan (N-linked (GlcNAc...) asparagine; by host) is linked at N398. Y402 (nucleophile) is an active-site residue.

It belongs to the glycosyl hydrolase 34 family. In terms of assembly, homotetramer. The cofactor is Ca(2+). In terms of processing, N-glycosylated.

The protein resides in the virion membrane. The protein localises to the host apical cell membrane. The catalysed reaction is Hydrolysis of alpha-(2-&gt;3)-, alpha-(2-&gt;6)-, alpha-(2-&gt;8)- glycosidic linkages of terminal sialic acid residues in oligosaccharides, glycoproteins, glycolipids, colominic acid and synthetic substrates.. Its activity is regulated as follows. Inhibited by the neuraminidase inhibitors zanamivir (Relenza) and oseltamivir (Tamiflu). These drugs interfere with the release of progeny virus from infected cells and are effective against all influenza strains. Resistance to neuraminidase inhibitors is quite rare. In terms of biological role, catalyzes the removal of terminal sialic acid residues from viral and cellular glycoconjugates. Cleaves off the terminal sialic acids on the glycosylated HA during virus budding to facilitate virus release. Additionally helps virus spread through the circulation by further removing sialic acids from the cell surface. These cleavages prevent self-aggregation and ensure the efficient spread of the progeny virus from cell to cell. Otherwise, infection would be limited to one round of replication. Described as a receptor-destroying enzyme because it cleaves a terminal sialic acid from the cellular receptors. May facilitate viral invasion of the upper airways by cleaving the sialic acid moieties on the mucin of the airway epithelial cells. Likely to plays a role in the budding process through its association with lipid rafts during intracellular transport. May additionally display a raft-association independent effect on budding. Plays a role in the determination of host range restriction on replication and virulence. Sialidase activity in late endosome/lysosome traffic seems to enhance virus replication. The chain is Neuraminidase from Aves (Horse).